The chain runs to 520 residues: Tetratricopeptide repeat protein 6 (520 aa).

TPR repeat units lie at residues 57–90, 101–138, 139–172, 176–209, 210–243, 245–280, 281–314, 320–347, 348–381, 382–415, 416–449, 450–483, and 484–517; these read MTMC…ISHS, ADCL…DKNS, YTAF…DATE, LNTF…SRTN, GSLC…NPCF, DAYV…NPAY, IKAR…DPKN, GRAV…ISTT, AEFL…NPKY, SLAY…DPEN, EYVL…CPFW, AAVY…KPND, and ALVY…EDYA.

The polypeptide is Tetratricopeptide repeat protein 6 (Homo sapiens (Human)).